The following is a 283-amino-acid chain: Acetyl-coenzyme A carboxylase carboxyl transferase subunit beta (283 aa).

In terms of domain architecture, CoA carboxyltransferase N-terminal spans 29–283 (LWVACPKCQQ…LKLHERGAHY (255 aa)). The Zn(2+) site is built by Cys-33, Cys-36, Cys-51, and Cys-54. Residues 33–54 (CPKCQQSIYHKDLGYYRTCPVC) form a C4-type zinc finger.

The protein belongs to the AccD/PCCB family. Acetyl-CoA carboxylase is a heterohexamer composed of biotin carboxyl carrier protein (AccB), biotin carboxylase (AccC) and two subunits each of ACCase subunit alpha (AccA) and ACCase subunit beta (AccD). The cofactor is Zn(2+).

The protein resides in the cytoplasm. It carries out the reaction N(6)-carboxybiotinyl-L-lysyl-[protein] + acetyl-CoA = N(6)-biotinyl-L-lysyl-[protein] + malonyl-CoA. Its pathway is lipid metabolism; malonyl-CoA biosynthesis; malonyl-CoA from acetyl-CoA: step 1/1. Component of the acetyl coenzyme A carboxylase (ACC) complex. Biotin carboxylase (BC) catalyzes the carboxylation of biotin on its carrier protein (BCCP) and then the CO(2) group is transferred by the transcarboxylase to acetyl-CoA to form malonyl-CoA. The protein is Acetyl-coenzyme A carboxylase carboxyl transferase subunit beta of Latilactobacillus sakei subsp. sakei (strain 23K) (Lactobacillus sakei subsp. sakei).